We begin with the raw amino-acid sequence, 296 residues long: Nucleotide-binding protein SMU_1306c (296 aa).

Glycine 13–threonine 20 contributes to the ATP binding site. Aspartate 63 to serine 66 lines the GTP pocket.

The protein belongs to the RapZ-like family.

In terms of biological role, displays ATPase and GTPase activities. The chain is Nucleotide-binding protein SMU_1306c from Streptococcus mutans serotype c (strain ATCC 700610 / UA159).